The chain runs to 693 residues: Polyribonucleotide nucleotidyltransferase (693 aa).

Mg(2+)-binding residues include Asp487 and Asp493. Positions 554–613 constitute a KH domain; that stretch reads PRIYTIKINPEKIKDVIGKGGSIIRMLTEETGTVIEIKDDGIVKISAINGEKAKYAIKRI. The S1 motif domain occupies 623–691; the sequence is GKIYSGKVTR…RQGRIRLSMK (69 aa).

It belongs to the polyribonucleotide nucleotidyltransferase family. Component of the RNA degradosome, which is a multiprotein complex involved in RNA processing and mRNA degradation. Requires Mg(2+) as cofactor.

Its subcellular location is the cytoplasm. It carries out the reaction RNA(n+1) + phosphate = RNA(n) + a ribonucleoside 5'-diphosphate. In terms of biological role, involved in mRNA degradation. Catalyzes the phosphorolysis of single-stranded polyribonucleotides processively in the 3'- to 5'-direction. In Buchnera aphidicola subsp. Cinara cedri (strain Cc), this protein is Polyribonucleotide nucleotidyltransferase.